We begin with the raw amino-acid sequence, 371 residues long: DNA-directed RNA polymerase subunit alpha (371 aa).

Residues 1-248 (MSVKYGKFEM…KHFEVFNQFN (248 aa)) form an alpha N-terminal domain (alpha-NTD) region. The segment at 264 to 371 (DQDELMDKLS…KELVKHEDAK (108 aa)) is alpha C-terminal domain (alpha-CTD).

The protein belongs to the RNA polymerase alpha chain family. As to quaternary structure, homodimer. The RNAP catalytic core consists of 2 alpha, 1 beta, 1 beta' and 1 omega subunit. When a sigma factor is associated with the core the holoenzyme is formed, which can initiate transcription.

The catalysed reaction is RNA(n) + a ribonucleoside 5'-triphosphate = RNA(n+1) + diphosphate. DNA-dependent RNA polymerase catalyzes the transcription of DNA into RNA using the four ribonucleoside triphosphates as substrates. In Protochlamydia amoebophila (strain UWE25), this protein is DNA-directed RNA polymerase subunit alpha.